The sequence spans 81 residues: ATP synthase subunit C, cyanelle (81 aa).

The next 2 helical transmembrane spans lie at 7–27 (AASVIAAALAVGLAAIGPGIG) and 57–77 (LAFMEALTIYGLVVALALLFA).

The protein belongs to the ATPase C chain family. F-type ATPases have 2 components, F(1) - the catalytic core - and F(0) - the membrane proton channel. F(1) has five subunits: alpha(3), beta(3), gamma(1), delta(1), epsilon(1). F(0) has four main subunits: a(1), b(1), b'(1) and c(10-14). The alpha and beta chains form an alternating ring which encloses part of the gamma chain. F(1) is attached to F(0) by a central stalk formed by the gamma and epsilon chains, while a peripheral stalk is formed by the delta, b and b' chains.

The protein localises to the plastid. It is found in the cyanelle thylakoid membrane. F(1)F(0) ATP synthase produces ATP from ADP in the presence of a proton or sodium gradient. F-type ATPases consist of two structural domains, F(1) containing the extramembraneous catalytic core and F(0) containing the membrane proton channel, linked together by a central stalk and a peripheral stalk. During catalysis, ATP synthesis in the catalytic domain of F(1) is coupled via a rotary mechanism of the central stalk subunits to proton translocation. In terms of biological role, key component of the F(0) channel; it plays a direct role in translocation across the membrane. A homomeric c-ring of between 10-14 subunits forms the central stalk rotor element with the F(1) delta and epsilon subunits. This Cyanophora paradoxa protein is ATP synthase subunit C, cyanelle.